The sequence spans 209 residues: Peroxynitrite isomerase 2 (209 aa).

The short motif at Gly-56 to Gly-62 is the GXWXGXG element. Lys-172 and His-199 together coordinate heme b.

This sequence belongs to the nitrobindin family. In terms of assembly, homodimer. The cofactor is heme b.

It catalyses the reaction peroxynitrite = nitrate. It functions in the pathway nitrogen metabolism. Heme-binding protein able to scavenge peroxynitrite and to protect free L-tyrosine against peroxynitrite-mediated nitration, by acting as a peroxynitrite isomerase that converts peroxynitrite to nitrate. Therefore, this protein likely plays a role in peroxynitrite sensing and in the detoxification of reactive nitrogen and oxygen species (RNS and ROS, respectively). Is able to bind nitric oxide (NO) in vitro, but may act as a sensor of peroxynitrite levels in vivo. The sequence is that of Peroxynitrite isomerase 2 from Mycolicibacterium vanbaalenii (strain DSM 7251 / JCM 13017 / BCRC 16820 / KCTC 9966 / NRRL B-24157 / PYR-1) (Mycobacterium vanbaalenii).